Consider the following 396-residue polypeptide: Probable isocitrate dehydrogenase [NAD] gamma 2, mitochondrial (396 aa).

The N-terminal 25 residues, Met-1–Val-25, are a transit peptide targeting the mitochondrion. Position 117 (Thr-117) interacts with citrate. Arg-133, Arg-164, and Asp-251 together coordinate substrate. Asp-251 serves as a coordination point for Mn(2+). Position 321 (Asn-321) interacts with ADP.

Belongs to the isocitrate and isopropylmalate dehydrogenases family. As to quaternary structure, heterooligomer of subunits alpha (IDH3A), beta (IDH3B), and gamma (IDH3G) in the apparent ratio of 2:1:1. The heterodimer containing one IDH3A and one IDH3B subunit and the heterodimer containing one IDH3A and one IDH3G subunit assemble into a heterotetramer (which contains two subunits of IDH3A, one of IDH3B and one of IDH3G) and further into the heterooctamer. Requires Mg(2+) as cofactor. Mn(2+) serves as cofactor.

The protein resides in the mitochondrion. Its activity is regulated as follows. The heterotetramer and the heterodimer composed of IDH3A and IDH3G subunits can be allosterically activated by citrate (CIT) or/and ADP, and the two activators can act independently or synergistically. The heterodimer composed of IDH3A and IDH3B subunits cannot be allosterically regulated and the allosteric regulation of the heterotetramer is through the IDH3G subunit and not the IDH3B subunit. The IDH3G subunit contains the allosteric site which consists of a CIT-binding site and an ADP-binding site, and the binding of CIT and ADP causes conformational changes at the allosteric site which are transmitted to the active site in the catalytic subunit (IDH3A) through a cascade of conformational changes at the heterodimer interface, leading to stabilization of the isocitrate-binding at the active site and thus activation of the enzyme. ATP can activate the heterotetramer and the heterodimer composed of IDH3A and IDH3G subunits at low concentrations but inhibits their activities at high concentrations, whereas ATP exhibits only inhibitory effect on the heterodimer composed of IDH3A and IDH3B subunits. In terms of biological role, regulatory subunit which plays a role in the allosteric regulation of the enzyme catalyzing the decarboxylation of isocitrate (ICT) into alpha-ketoglutarate. The heterodimer composed of the alpha (IDH3A) and beta (IDH3B) subunits and the heterodimer composed of the alpha (IDH3A) and gamma (IDH3G) subunits, have considerable basal activity but the full activity of the heterotetramer (containing two subunits of IDH3A, one of IDH3B and one of IDH3G) requires the assembly and cooperative function of both heterodimers. The protein is Probable isocitrate dehydrogenase [NAD] gamma 2, mitochondrial of Mus musculus (Mouse).